Consider the following 969-residue polypeptide: Protein translocase subunit SecA (969 aa).

ATP-binding positions include Gln99, 117-121 (GEGKT), and Asp631.

This sequence belongs to the SecA family. In terms of assembly, monomer and homodimer. Part of the essential Sec protein translocation apparatus which comprises SecA, SecYEG and auxiliary proteins SecDF. Other proteins may also be involved.

Its subcellular location is the cell inner membrane. It localises to the cytoplasm. The catalysed reaction is ATP + H2O + cellular proteinSide 1 = ADP + phosphate + cellular proteinSide 2.. Functionally, part of the Sec protein translocase complex. Interacts with the SecYEG preprotein conducting channel. Has a central role in coupling the hydrolysis of ATP to the transfer of proteins into and across the cell membrane, serving as an ATP-driven molecular motor driving the stepwise translocation of polypeptide chains across the membrane. This Chlamydia trachomatis serovar L2 (strain ATCC VR-902B / DSM 19102 / 434/Bu) protein is Protein translocase subunit SecA.